The chain runs to 666 residues: ESX-1 secretion-associated protein EspI (666 aa).

The segment covering 1-15 (MAADYDKLFRPHEGM) has biased composition (basic and acidic residues). The interval 1–378 (MAADYDKLFR…ATKPPKVVSQ (378 aa)) is disordered. The segment covering 22-31 (AAQPFFDPSA) has biased composition (low complexity). 3 stretches are compositionally biased toward pro residues: residues 64 to 80 (APPPPPPPPPPPPPTPM), 87 to 144 (PPSP…PAPT), and 188 to 205 (PAPPWAKMPIGEPPPAPS). The segment covering 222 to 231 (HSRRARRGHR) has biased composition (basic residues). Positions 284 to 297 (PTRPAPTEPPPSPS) are enriched in pro residues. Basic residues predominate over residues 357-371 (PKVKKVKPQKPKATK). ATP is bound at residue 424–431 (LKGGAGKT).

Functionally, required to repress ESX-1-mediated secretion under low ATP conditions. This function requires the ATP-binding motif. In Mycobacterium tuberculosis (strain CDC 1551 / Oshkosh), this protein is ESX-1 secretion-associated protein EspI.